A 643-amino-acid polypeptide reads, in one-letter code: Pseudouridylate synthase PUS7L (643 aa).

The Nucleophile role is filled by D284. The 228-residue stretch at 370–597 (GFVNYYGPQR…PGCYRPLLAK (228 aa)) folds into the TRUD domain.

This sequence belongs to the pseudouridine synthase TruD family.

It catalyses the reaction a uridine in mRNA = a pseudouridine in mRNA. Functionally, pseudouridine synthase that catalyzes pseudouridylation of mRNAs. The chain is Pseudouridylate synthase PUS7L (pus7l) from Danio rerio (Zebrafish).